The sequence spans 415 residues: Serine hydroxymethyltransferase (415 aa).

(6S)-5,6,7,8-tetrahydrofolate is bound by residues Leu119 and 123-125 (GHL). Position 228 is an N6-(pyridoxal phosphate)lysine (Lys228). (6S)-5,6,7,8-tetrahydrofolate is bound at residue 353-355 (SAF).

This sequence belongs to the SHMT family. In terms of assembly, homodimer. The cofactor is pyridoxal 5'-phosphate.

It localises to the cytoplasm. The catalysed reaction is (6R)-5,10-methylene-5,6,7,8-tetrahydrofolate + glycine + H2O = (6S)-5,6,7,8-tetrahydrofolate + L-serine. The protein operates within one-carbon metabolism; tetrahydrofolate interconversion. Its pathway is amino-acid biosynthesis; glycine biosynthesis; glycine from L-serine: step 1/1. In terms of biological role, catalyzes the reversible interconversion of serine and glycine with tetrahydrofolate (THF) serving as the one-carbon carrier. Also exhibits THF-independent aldolase activity toward beta-hydroxyamino acids, producing glycine and aldehydes, via a retro-aldol mechanism. This chain is Serine hydroxymethyltransferase, found in Halobacterium salinarum (strain ATCC 29341 / DSM 671 / R1).